A 101-amino-acid polypeptide reads, in one-letter code: Small ribosomal subunit protein uS14 (101 aa).

Belongs to the universal ribosomal protein uS14 family. As to quaternary structure, part of the 30S ribosomal subunit. Contacts proteins S3 and S10.

Its function is as follows. Binds 16S rRNA, required for the assembly of 30S particles and may also be responsible for determining the conformation of the 16S rRNA at the A site. The protein is Small ribosomal subunit protein uS14 of Burkholderia vietnamiensis (strain G4 / LMG 22486) (Burkholderia cepacia (strain R1808)).